We begin with the raw amino-acid sequence, 156 residues long: Small ribosomal subunit protein uS7 (156 aa).

This sequence belongs to the universal ribosomal protein uS7 family. In terms of assembly, part of the 30S ribosomal subunit. Contacts proteins S9 and S11.

In terms of biological role, one of the primary rRNA binding proteins, it binds directly to 16S rRNA where it nucleates assembly of the head domain of the 30S subunit. Is located at the subunit interface close to the decoding center, probably blocks exit of the E-site tRNA. This chain is Small ribosomal subunit protein uS7, found in Brachyspira hyodysenteriae (strain ATCC 49526 / WA1).